Consider the following 353-residue polypeptide: NADH-quinone oxidoreductase subunit H (353 aa).

9 helical membrane-spanning segments follow: residues 8 to 28 (LLVY…LFIW), 75 to 95 (GVFW…FAAI), 108 to 128 (IGIL…FMAG), 148 to 168 (VSYE…TGSL), 178 to 198 (SVPF…AAMA), 229 to 249 (LFYL…TTLF), 258 to 278 (LHPV…IIWV), 297 to 317 (FLLP…LAAP), and 319 to 339 (MNTA…ILLF).

This sequence belongs to the complex I subunit 1 family. NDH-1 is composed of 14 different subunits. Subunits NuoA, H, J, K, L, M, N constitute the membrane sector of the complex.

The protein localises to the cell membrane. It catalyses the reaction a quinone + NADH + 5 H(+)(in) = a quinol + NAD(+) + 4 H(+)(out). NDH-1 shuttles electrons from NADH, via FMN and iron-sulfur (Fe-S) centers, to quinones in the respiratory chain. The immediate electron acceptor for the enzyme in this species is believed to be ubiquinone. Couples the redox reaction to proton translocation (for every two electrons transferred, four hydrogen ions are translocated across the cytoplasmic membrane), and thus conserves the redox energy in a proton gradient. This subunit may bind ubiquinone. This Dehalococcoides mccartyi (strain ATCC BAA-2266 / KCTC 15142 / 195) (Dehalococcoides ethenogenes (strain 195)) protein is NADH-quinone oxidoreductase subunit H.